Reading from the N-terminus, the 552-residue chain is FERRY endosomal RAB5 effector complex subunit 3 (552 aa).

Ser-79 is modified (phosphoserine).

In terms of assembly, component of the FERRY complex composed of five subunits, TBCK, PPP1R21, FERRY3, CRYZL1 and GATD1 with a ratio of 1:2:1:2:4, respectively.

The protein resides in the cytoplasm. Its subcellular location is the early endosome. Its function is as follows. Component of the FERRY complex (Five-subunit Endosomal Rab5 and RNA/ribosome intermediary). The FERRY complex directly interacts with mRNAs and RAB5A, and functions as a RAB5A effector involved in the localization and the distribution of specific mRNAs most likely by mediating their endosomal transport. The complex recruits mRNAs and ribosomes to early endosomes through direct mRNA-interaction. Plays a role in mast cell degranulation. The chain is FERRY endosomal RAB5 effector complex subunit 3 from Mus musculus (Mouse).